A 582-amino-acid polypeptide reads, in one-letter code: Acylamino-acid-releasing enzyme (582 aa).

Active-site charge relay system residues include Ser445, Asp524, and His556.

Belongs to the peptidase S9C family.

The protein resides in the cytoplasm. The enzyme catalyses Cleavage of an N-acetyl or N-formyl amino acid from the N-terminus of a polypeptide.. In terms of biological role, this enzyme catalyzes the hydrolysis of the N-terminal peptide bond of an N-acetylated peptide to generate an N-acetylated amino acid and a peptide with a free N-terminus. This Aeropyrum pernix (strain ATCC 700893 / DSM 11879 / JCM 9820 / NBRC 100138 / K1) protein is Acylamino-acid-releasing enzyme.